A 420-amino-acid chain; its full sequence is MTLLALGINHKTAPVALRERVAFSPETLDQALGSLLAHPLVQGGVVLSTCNRTELYLSVEQQADLQEALVRWLCDYHQLEPDEVRQSLYWHLGDEAVSHLMRVASGLDSLVLGEPQILGQVKKAFAESRRGHGLSVDLERWFQKSFSVAKRVRTETEIGSHAVSVAFAACTLARQIFESLADVTVLLVGAGETIELVARHLREHKVKRLLIANRTPERAQRLAEDVGADVINLAEIDSQLGEADIIITSTASTLPIIGKGMVERALKQRRYQPMLLVDIAVPRDIEPEVAKLADAYLYTVDDLQAIIEKNLAQRKHAAVLAETIVAQESMDFMGWLRSQSAVEAIRDYRTQADSLREEFEARALAALRLGADPEQVVKDMAYKLTNRLIHTPTKSLQQAAREGDAERLQILRDGLGLDTH.

Substrate is bound by residues threonine 49–arginine 52, serine 109, glutamate 114–glutamine 116, and glutamine 120. Cysteine 50 (nucleophile) is an active-site residue. Glycine 189–isoleucine 194 is a binding site for NADP(+).

The protein belongs to the glutamyl-tRNA reductase family. Homodimer.

It carries out the reaction (S)-4-amino-5-oxopentanoate + tRNA(Glu) + NADP(+) = L-glutamyl-tRNA(Glu) + NADPH + H(+). It participates in porphyrin-containing compound metabolism; protoporphyrin-IX biosynthesis; 5-aminolevulinate from L-glutamyl-tRNA(Glu): step 1/2. Functionally, catalyzes the NADPH-dependent reduction of glutamyl-tRNA(Glu) to glutamate 1-semialdehyde (GSA). The polypeptide is Glutamyl-tRNA reductase (Sodalis glossinidius (strain morsitans)).